The following is a 373-amino-acid chain: D-amino-acid transaminase, chloroplastic (373 aa).

The transit peptide at 1 to 57 directs the protein to the chloroplast; it reads MAGLSLEFTVNTWNLRSLSQVPCPLRHGFRFPRRLTRRRTILMCSDSSSQSWNVPVL. R128 contacts pyridoxal 5'-phosphate. The active-site Proton acceptor is the K222. At K222 the chain carries N6-(pyridoxal phosphate)lysine. Position 255 (E255) interacts with pyridoxal 5'-phosphate.

Belongs to the class-IV pyridoxal-phosphate-dependent aminotransferase family. As to quaternary structure, homodimer. Pyridoxal 5'-phosphate serves as cofactor.

The protein resides in the plastid. It localises to the chloroplast. The enzyme catalyses D-alanine + 2-oxoglutarate = D-glutamate + pyruvate. The catalysed reaction is 4-amino-4-deoxychorismate = 4-aminobenzoate + pyruvate + H(+). Its pathway is cofactor biosynthesis; tetrahydrofolate biosynthesis; 4-aminobenzoate from chorismate: step 2/2. With respect to regulation, inhibited by hydroxylamine or amino-oxyacetic acid. In terms of biological role, amino acid aminotransferase showing activity for D-Asp and D-Ala as amino donors with 2-oxoglutarate as an amino acceptor. Can also use D-Met, D-Tyr, D-Phe, D-Gln, D-Trp and D-Asn as substrates, but no activity with L-Asp, L-Ala, L-Leu, L-Ile or L-Val. Also catalyzes the reverse reaction where an amino group is transferred from D-Glu to pyruvate or oxaloacetate to produce D-Ala or D-Asp, respectively. Also involved in folate biosynthesis, acting as an aminodeoxychorismate lyase converting 4-amino-4-deoxychorismate (ADC) to p-aminobenzoate (PABA). This chain is D-amino-acid transaminase, chloroplastic, found in Arabidopsis thaliana (Mouse-ear cress).